Here is a 689-residue protein sequence, read N- to C-terminus: Glycine--tRNA ligase beta subunit (689 aa).

It belongs to the class-II aminoacyl-tRNA synthetase family. Tetramer of two alpha and two beta subunits.

Its subcellular location is the cytoplasm. It carries out the reaction tRNA(Gly) + glycine + ATP = glycyl-tRNA(Gly) + AMP + diphosphate. This Shewanella piezotolerans (strain WP3 / JCM 13877) protein is Glycine--tRNA ligase beta subunit.